Reading from the N-terminus, the 491-residue chain is Protein nucleotidyltransferase YdiU (491 aa).

ATP-binding residues include G94, G96, R97, K117, D129, G130, R180, and R187. D256 (proton acceptor) is an active-site residue. Residues N257 and D266 each coordinate Mg(2+). Position 266 (D266) interacts with ATP.

It belongs to the SELO family. Requires Mg(2+) as cofactor. Mn(2+) is required as a cofactor.

It carries out the reaction L-seryl-[protein] + ATP = 3-O-(5'-adenylyl)-L-seryl-[protein] + diphosphate. The catalysed reaction is L-threonyl-[protein] + ATP = 3-O-(5'-adenylyl)-L-threonyl-[protein] + diphosphate. It catalyses the reaction L-tyrosyl-[protein] + ATP = O-(5'-adenylyl)-L-tyrosyl-[protein] + diphosphate. The enzyme catalyses L-histidyl-[protein] + UTP = N(tele)-(5'-uridylyl)-L-histidyl-[protein] + diphosphate. It carries out the reaction L-seryl-[protein] + UTP = O-(5'-uridylyl)-L-seryl-[protein] + diphosphate. The catalysed reaction is L-tyrosyl-[protein] + UTP = O-(5'-uridylyl)-L-tyrosyl-[protein] + diphosphate. Functionally, nucleotidyltransferase involved in the post-translational modification of proteins. It can catalyze the addition of adenosine monophosphate (AMP) or uridine monophosphate (UMP) to a protein, resulting in modifications known as AMPylation and UMPylation. This is Protein nucleotidyltransferase YdiU from Clostridium botulinum (strain Loch Maree / Type A3).